The primary structure comprises 88 residues: uncharacterized protein (88 aa).

This is an uncharacterized protein from Haloarcula hispanica (His1V).